A 313-amino-acid chain; its full sequence is 4-diphosphocytidyl-2-C-methyl-D-erythritol kinase (313 aa).

Lysine 10 is a catalytic residue. 95–105 contacts ATP; sequence PVTAGLGGGSS. Aspartate 136 is an active-site residue. The interval 289–313 is disordered; that stretch reads HPRVSPWRSPRSASSRSTRRSSRPT. The span at 292–304 shows a compositional bias: low complexity; the sequence is VSPWRSPRSASSR.

Belongs to the GHMP kinase family. IspE subfamily.

It carries out the reaction 4-CDP-2-C-methyl-D-erythritol + ATP = 4-CDP-2-C-methyl-D-erythritol 2-phosphate + ADP + H(+). It functions in the pathway isoprenoid biosynthesis; isopentenyl diphosphate biosynthesis via DXP pathway; isopentenyl diphosphate from 1-deoxy-D-xylulose 5-phosphate: step 3/6. Functionally, catalyzes the phosphorylation of the position 2 hydroxy group of 4-diphosphocytidyl-2C-methyl-D-erythritol. The protein is 4-diphosphocytidyl-2-C-methyl-D-erythritol kinase of Anaeromyxobacter dehalogenans (strain 2CP-1 / ATCC BAA-258).